The sequence spans 547 residues: Chaperonin GroEL (547 aa).

ATP contacts are provided by residues 30 to 33 (TLGP), Lys51, 87 to 91 (DGTTT), Gly415, and Asp496. The segment at 527 to 547 (ENTPDMPAMPPGGMGGMGGMY) is disordered. Positions 538–547 (GGMGGMGGMY) are enriched in gly residues.

This sequence belongs to the chaperonin (HSP60) family. As to quaternary structure, forms a cylinder of 14 subunits composed of two heptameric rings stacked back-to-back. Interacts with the co-chaperonin GroES.

It localises to the cytoplasm. The catalysed reaction is ATP + H2O + a folded polypeptide = ADP + phosphate + an unfolded polypeptide.. In terms of biological role, together with its co-chaperonin GroES, plays an essential role in assisting protein folding. The GroEL-GroES system forms a nano-cage that allows encapsulation of the non-native substrate proteins and provides a physical environment optimized to promote and accelerate protein folding. The chain is Chaperonin GroEL from Chlorobium phaeovibrioides (strain DSM 265 / 1930) (Prosthecochloris vibrioformis (strain DSM 265)).